The chain runs to 217 residues: Adenylate kinase (217 aa).

ATP is bound at residue 10–15; that stretch reads GAGKGT. The interval 30-59 is NMP; that stretch reads STGDIFRKNVADDTPLGRLAKQYMDAGDLV. Residues Thr-31, Arg-36, 57–59, 85–88, and Gln-92 each bind AMP; these read DLV and GFPR. The interval 126–163 is LID; that stretch reads GRRTCADCAHVWHVTYDPPTVDGVCDLCGGKLFQREDD. Arg-127 lines the ATP pocket. Residues Cys-130, Cys-133, Cys-150, and Cys-153 each coordinate Zn(2+). AMP is bound by residues Arg-160 and Arg-171. Residue Gly-199 coordinates ATP.

Belongs to the adenylate kinase family. In terms of assembly, monomer.

The protein resides in the cytoplasm. The catalysed reaction is AMP + ATP = 2 ADP. It functions in the pathway purine metabolism; AMP biosynthesis via salvage pathway; AMP from ADP: step 1/1. Functionally, catalyzes the reversible transfer of the terminal phosphate group between ATP and AMP. Plays an important role in cellular energy homeostasis and in adenine nucleotide metabolism. The sequence is that of Adenylate kinase from Acidothermus cellulolyticus (strain ATCC 43068 / DSM 8971 / 11B).